The sequence spans 1077 residues: Receptor-type guanylate cyclase daf-11 (1077 aa).

Residues Asn14, Asn112, Asn149, and Asn311 are each glycosylated (N-linked (GlcNAc...) asparagine). A helical transmembrane segment spans residues 335–355; the sequence is TGVIIAIAVIMGVLLMFIIIL. The region spanning 355–695 is the Protein kinase domain; sequence LTTIRKCCNG…LARKIIDTVL (341 aa). Residues 356–1077 lie on the Cytoplasmic side of the membrane; that stretch reads TTIRKCCNGS…DSQASTIPDN (722 aa). A Guanylate cyclase domain is found at 765–895; it reads TILYSDIVGF…EAVILASKME (131 aa). Positions 770, 771, and 814 each coordinate Mg(2+). Residues 983–1034 adopt a coiled-coil conformation; it reads KDKMTLAKEKVIAERKNEEERLQRQQTLQEALEEHEEEIEMNEVLVDEDEGE. The disordered stretch occupies residues 1048–1077; the sequence is TQMEELEDEPAGRTIGHGRLDSQASTIPDN.

It belongs to the adenylyl cyclase class-4/guanylyl cyclase family. In terms of tissue distribution, expressed in sensory neurons including ASI, ASJ, ASK, AWB and AWC. Expressed in ASJ neurons in the dauer stage.

Its subcellular location is the cell membrane. It localises to the cell projection. It is found in the dendrite. The protein localises to the cilium. The protein resides in the perikaryon. The enzyme catalyses GTP = 3',5'-cyclic GMP + diphosphate. In terms of biological role, guanylate cyclase involved in the production of the second messenger cGMP. In addition, regulates cGMP levels by controlling the transcription of 3',5'-cyclic phosphodiesterase pde-1 and pde-5 mRNAs. Involved in the olfactory, light and pheromone sensing pathways. Part of the chemosensory mechanism of the ASJ sensory neuron that controls dauer formation and dauer recovery. Promotes the calcium flux in ASJ sensory neurons in response to onset and removal of a nitric oxide (NO) stimulus and is thereby required for the behavioral avoidance response to NO-producing organisms like P.aeruginosa. In ASI and ASJ sensory neurons, controls dauer formation and behavioral response to P.aeruginosa by up-regulating the transcription of daf-7, a member of the TGF-beta family. Required for the chemotaxis responses to non-volatile and volatile attractants mediated by the sensory neurons ASE and AWC respectively. Required in ASJ neurons for phototransduction downstream of G protein coupled-photoreceptor lite-1. Plays a role in the development of ASJ sensory neuron axons during late larval stages and in the maintenance of normal axon morphology in adults. Required to maintain the expression of putative olfactory receptor str-2 in one of the two AWC neurons in adults. Regulates, via the production of cGMP, lifespan (in some environmental conditions), sensitivity to oxidative stress and entry into quiescence triggered by satiety. In AWB and AWC sensory neurons, mediates the recognition of food odors which subsequently allows for the detection of preferred food sources. The polypeptide is Receptor-type guanylate cyclase daf-11 (Caenorhabditis elegans).